A 572-amino-acid polypeptide reads, in one-letter code: Transducin-like enhancer protein 6 (572 aa).

3 disordered regions span residues 1–30 (MTSRDQPRPKGPPKSTSPCPGISNSESSPT), 92–121 (QSEEVSPAEPASPGTPQQVKDKTLQESSFE), and 174–236 (KAKP…VQEP). The span at 14 to 30 (KSTSPCPGISNSESSPT) shows a compositional bias: polar residues. 7 WD repeats span residues 284 to 322 (AHGELVLATAISSFTRHVFTCGRRGIKVWSLTGQVAEDR), 332 to 372 (TPGA…LHVK), 377 to 416 (CAGLNCQALDANLDANLAFASFTSGVVRIWDLRDQSVVRD), 419 to 456 (GYPDGVKSIVVKGYNIWTGGPDACLRCWDQRTIMKPLE), 458 to 497 (QFKSQIMSLSHSPQEDWVLLGMANGQQWLQSTSGSQRHMV), 499 to 538 (QKDSVILSVKFSPFGQWWASVGMDDFLGVYSMPAGTKVFE), and 540 to 571 (PEMSPVTCCDVSSNNRLVVTGSGEHASVYQIT). Ser510 is subject to Phosphoserine; by PKA.

It belongs to the WD repeat Groucho/TLE family. In terms of assembly, homodimers. Component of the subcortical maternal complex (SCMC), at least composed of NLRP5, KHDC3, OOEP, and TLE6. Within the complex, interacts with NLRP5, KHDC3 and OOEP. The SCMC may facilitate translocation of its components between the nuclear and cytoplasmic compartments. As part of the SCMC interacts with the SCMC-associated protein ZBED3. As part of the SCMC interacts with the SCMC-associated protein NLRP4F. As part of the SCMC interacts with the SCMC-associated protein CFL1/Cofilin-1. Interacts with FOXG1/BF-1; the interaction inhibits TLE1 interaction with FOXG1/BF-1. Interacts with NFATC1. Interacts with PAX6. As to quaternary structure, component of the subcortical maternal complex (SCMC), at least composed of NLRP5, KHDC3L, OOEP, and TLE6 isoform 1. Within the complex, interacts with NLRP5, KHDC3L and OOEP. The SCMC may facilitate translocation of its components between the nuclear and cytoplasmic compartments.

The protein resides in the cytoplasm. It localises to the nucleus. Its function is as follows. Component of the subcortical maternal complex (SCMC), a multiprotein complex that plays a key role in early embryonic development. The SCMC complex is a structural constituent of cytoplasmic lattices, which consist in fibrous structures found in the cytoplasm of oocytes and preimplantation embryos. They are required to store maternal proteins critical for embryonic development, such as proteins that control epigenetic reprogramming of the preimplantation embryo, and prevent their degradation or activation. Also required for spermatogenesis: regulates spermatogonia proliferation and cell cycle progression, potentially via regulation of cell cycle regulatory genes such as; CEBPB, CEBPA, CSF3, PCNA, and CDK4. Suppresses FOXG1/BF-1-mediated transcriptional repression by inhibiting interaction of the transcriptional corepressor TLE1 with FOXG1 which promotes cortical neuron differentiation. Acts as a transcriptional corepressor of NFATC1-mediated gene expression by contributing to PAX6-mediated repression. In terms of biological role, component of the subcortical maternal complex (SCMC), a multiprotein complex that plays a key role in early embryonic development. The protein is Transducin-like enhancer protein 6 of Homo sapiens (Human).